The chain runs to 338 residues: Putative ankyrin repeat protein CBU_0781 (338 aa).

Residues 1-31 (MSRRETPTSTISSTPTGTRTPRRRLSRKGHP) are disordered. The span at 7-19 (PTSTISSTPTGTR) shows a compositional bias: low complexity. Basic residues predominate over residues 20–31 (TPRRRLSRKGHP). ANK repeat units follow at residues 92 to 124 (QGDT…IVNK) and 125 to 157 (LGET…IKYK). A coiled-coil region spans residues 197-242 (SQIMASDKEIDEIIRNARNLQIIKKEKREAEERARTKKSKQITLQR). The interval 319–338 (KKEDTTLSRNNSLSCLSSPR) is disordered. Low complexity predominate over residues 325–338 (LSRNNSLSCLSSPR).

The chain is Putative ankyrin repeat protein CBU_0781 from Coxiella burnetii (strain RSA 493 / Nine Mile phase I).